Reading from the N-terminus, the 566-residue chain is Nitrate/nitrite sensor protein NarQ (566 aa).

Over 1–13 the chain is Cytoplasmic; sequence MIVKRPVSASLAR. Residues 14 to 34 traverse the membrane as a helical segment; that stretch reads AFFYIVLLSILSTGIALLTLA. Residues 35-146 lie on the Periplasmic side of the membrane; the sequence is SSLRDAEAIN…LALQHYAERK (112 aa). The chain crosses the membrane as a helical span at residues 147–167; that stretch reads MLLVVAISLAGGIGIFTLVFF. Topologically, residues 168 to 566 are cytoplasmic; that stretch reads TLRRIRHQVV…SAEGEESQLM (399 aa). Residues 174 to 227 form the HAMP domain; sequence HQVVAPLNQLVTASQRIEHGQFDSPPLDTNLPNELGLLAKTFNQMSSELHKLYR. The Histidine kinase domain occupies 364–559; sequence TIARELHDSL…LVSISFRSAE (196 aa). His370 is subject to Phosphohistidine; by autocatalysis.

The protein localises to the cell inner membrane. The catalysed reaction is ATP + protein L-histidine = ADP + protein N-phospho-L-histidine.. Its function is as follows. Acts as a sensor for nitrate/nitrite and transduces signal of nitrate/nitrite availability to the NarL/NarP proteins. NarQ probably activates NarL and NarP by phosphorylation. NarQ probably negatively regulates the NarL protein by dephosphorylation. The polypeptide is Nitrate/nitrite sensor protein NarQ (narQ) (Escherichia coli (strain K12)).